The chain runs to 586 residues: A-type ATP synthase subunit A (586 aa).

Position 238–245 (238–245 (GPFGSGKT)) interacts with ATP.

This sequence belongs to the ATPase alpha/beta chains family. In terms of assembly, has multiple subunits with at least A(3), B(3), C, D, E, F, H, I and proteolipid K(x).

It localises to the cell membrane. It carries out the reaction ATP + H2O + 4 H(+)(in) = ADP + phosphate + 5 H(+)(out). In terms of biological role, component of the A-type ATP synthase that produces ATP from ADP in the presence of a proton gradient across the membrane. The A chain is the catalytic subunit. In Haloferax volcanii (strain ATCC 29605 / DSM 3757 / JCM 8879 / NBRC 14742 / NCIMB 2012 / VKM B-1768 / DS2) (Halobacterium volcanii), this protein is A-type ATP synthase subunit A.